The following is a 396-amino-acid chain: Small ribosomal subunit protein mS27 (396 aa).

Belongs to the mitochondrion-specific ribosomal protein mS27 family. In terms of assembly, component of the mitochondrial small ribosomal subunit (mt-SSU). Mature N.crassa 74S mitochondrial ribosomes consist of a small (37S) and a large (54S) subunit. The 37S small subunit contains a 16S ribosomal RNA (16S mt-rRNA) and 32 different proteins. The 54S large subunit contains a 23S rRNA (23S mt-rRNA) and 42 different proteins.

It localises to the mitochondrion. Its function is as follows. Component of the mitochondrial ribosome (mitoribosome), a dedicated translation machinery responsible for the synthesis of mitochondrial genome-encoded proteins, including at least some of the essential transmembrane subunits of the mitochondrial respiratory chain. The mitoribosomes are attached to the mitochondrial inner membrane and translation products are cotranslationally integrated into the membrane. This chain is Small ribosomal subunit protein mS27 (mrp13), found in Neurospora crassa (strain ATCC 24698 / 74-OR23-1A / CBS 708.71 / DSM 1257 / FGSC 987).